The following is an 88-amino-acid chain: Small ribosomal subunit protein uS19 (88 aa).

It belongs to the universal ribosomal protein uS19 family.

Protein S19 forms a complex with S13 that binds strongly to the 16S ribosomal RNA. The sequence is that of Small ribosomal subunit protein uS19 from Ureaplasma parvum serovar 3 (strain ATCC 27815 / 27 / NCTC 11736).